Consider the following 139-residue polypeptide: Putative pre-16S rRNA nuclease (139 aa).

Belongs to the YqgF nuclease family.

It localises to the cytoplasm. Its function is as follows. Could be a nuclease involved in processing of the 5'-end of pre-16S rRNA. This chain is Putative pre-16S rRNA nuclease, found in Thermoanaerobacter pseudethanolicus (strain ATCC 33223 / 39E) (Clostridium thermohydrosulfuricum).